Here is a 192-residue protein sequence, read N- to C-terminus: MEDSQPIKVRQPSISAPGTHLSPNPGQQSPSMVVPFQVSVSDLGVSEVSAQITLSSDPTLAQLTSIYRMASIVECEAVLFPNSTSSKNPVHCDLIWVPSNSSASPKTILQTYGGNRFTVGGPITSNQIISFPLRLDSVNPIIKDSVLYLDSPRLLAFSPAPPETQSIPSASLLIRGKLRLSSILVQPLLTSS.

The segment at 1–30 is disordered; it reads MEDSQPIKVRQPSISAPGTHLSPNPGQQSP. The segment covering 12 to 30 has biased composition (polar residues); that stretch reads PSISAPGTHLSPNPGQQSP.

It belongs to the tymoviruses capsid protein family.

The protein resides in the virion. Its function is as follows. Self-assembles to form a T=3 icosahedral capsid composed of 180 copies of the capsid protein. The capsid encapsulates the single-stranded RNA genome. The polypeptide is Capsid protein (Ononis).